The sequence spans 64 residues: Large ribosomal subunit protein bL35 (64 aa).

Residues 1–15 (MPKSKTHSGTAKRFK) are compositionally biased toward basic residues. A disordered region spans residues 1-23 (MPKSKTHSGTAKRFKVSGSGKIL).

The protein belongs to the bacterial ribosomal protein bL35 family.

This chain is Large ribosomal subunit protein bL35, found in Rhodococcus jostii (strain RHA1).